Here is a 96-residue protein sequence, read N- to C-terminus: Neurotoxin 23 (96 aa).

The N-terminal stretch at 1 to 22 is a signal peptide; that stretch reads MKNIVIIITVAVLFNLFGESLQ. The 64-residue stretch at 26-89 folds into the LCN-type CS-alpha/beta domain; it reads FETYPLNQDD…FLAEIIDTCN (64 aa). 3 disulfide bridges follow: C40/C63, C49/C68, and C53/C70.

This sequence belongs to the long (3 C-C) scorpion toxin superfamily. In terms of tissue distribution, expressed by the venom gland.

Its subcellular location is the secreted. The chain is Neurotoxin 23 from Lychas mucronatus (Chinese swimming scorpion).